Here is a 413-residue protein sequence, read N- to C-terminus: MYDPERRWSLSFAGCGFLGFYHVGATLCLSERAPHLLRDARTFFGCSAGALHAVTFVCSLPLGRIMEILMDLVRKARSRNIGTLHPFFNINKCIRDGLQESLPDNVHQVISGKVHISLTRVSDGENVLVSEFHSKDEVVDALVCSCFIPLFSGLIPPSFRGERYVDGGVSDNVPVLDAKTTITVSPFYGEHDICPKVKSTNFFHVNITNLSLRLCTGNLQLLTRALFPSDVKVMGELCYQGYLDAFRFLEENGICNGPQRSLSLSLVAPEACLENGKLVGDKVPVSLCFTDENIWETLSPELSTALSEAIKDREGYLSKVCNLLPVRILSYIMLPCSLPVESAIAAVHRLVTWLPDIQDDIQWLQWATSQVCARMTMCLLPSTRSRASKDDHRMLKHGHHPSPHKPQGNSAGL.

Topologically, residues 1–42 (MYDPERRWSLSFAGCGFLGFYHVGATLCLSERAPHLLRDART) are cytoplasmic. The 170-residue stretch at 10-179 (LSFAGCGFLG…SDNVPVLDAK (170 aa)) folds into the PNPLA domain. The GXGXXG signature appears at 14–19 (GCGFLG). The chain crosses the membrane as a helical; Signal-anchor for type II membrane protein span at residues 43-63 (FFGCSAGALHAVTFVCSLPLG). The GXSXG motif lies at 45–49 (GCSAG). The active-site Nucleophile is serine 47. At 64-413 (RIMEILMDLV…HKPQGNSAGL (350 aa)) the chain is on the lumenal side. Aspartate 166 acts as the Proton acceptor in catalysis. The short motif at 166-168 (DGG) is the DGA/G element. N-linked (GlcNAc...) asparagine glycosylation is found at asparagine 206 and asparagine 209. The disordered stretch occupies residues 389 to 413 (KDDHRMLKHGHHPSPHKPQGNSAGL). Residues 394–403 (MLKHGHHPSP) show a composition bias toward basic residues.

As to expression, restricted to adipose tissue. Expressed in inguinal and epididymal white adipose tissues and in interscapular brown adipose tissue. Also expressed in liver in response to high-sucrose diet.

It localises to the membrane. Its subcellular location is the lipid droplet. The enzyme catalyses a 1-acyl-sn-glycero-3-phosphate + an acyl-CoA = a 1,2-diacyl-sn-glycero-3-phosphate + CoA. The catalysed reaction is a triacylglycerol + H2O = a diacylglycerol + a fatty acid + H(+). It catalyses the reaction a 1-acylglycerol + a 1,3-diacylglycerol = a triacylglycerol + glycerol. It carries out the reaction a 1-acylglycerol + a 1,2-diacylglycerol = a triacylglycerol + glycerol. The enzyme catalyses 2 a 1-acylglycerol = a 1,2-diacylglycerol + glycerol. The catalysed reaction is 1-(9Z-octadecenoyl)-sn-glycero-3-phosphate + (9Z)-octadecenoyl-CoA = 1,2-di-(9Z-octadecenoyl)-sn-glycero-3-phosphate + CoA. It catalyses the reaction 1-(9Z-octadecenoyl)-sn-glycero-3-phosphate + hexadecanoyl-CoA = 1-(9Z)-octadecenoyl-2-hexadecanoyl-sn-glycero-3-phosphate + CoA. It carries out the reaction 1-(9Z-octadecenoyl)-sn-glycero-3-phosphate + (9Z,12Z)-octadecadienoyl-CoA = 1-(9Z)-octadecenoyl-2-(9Z,12Z)-octadecadienoyl-sn-glycero-3-phosphate + CoA. The enzyme catalyses 1-(9Z-octadecenoyl)-sn-glycero-3-phosphate + (5Z,8Z,11Z,14Z)-eicosatetraenoyl-CoA = 1-(9Z)-octadecenoyl-2-(5Z,8Z,11Z,14Z)-eicosatetraenoyl-sn-glycero-3-phosphate + CoA. The catalysed reaction is 2 1-(9Z-octadecenoyl)-glycerol = 1,2-di-(9Z-octadecenoyl)-glycerol + glycerol. It catalyses the reaction 1-(9Z-octadecenoyl)-glycerol + 1,2-di-(9Z-octadecenoyl)-glycerol = 1,2,3-tri-(9Z-octadecenoyl)-glycerol + glycerol. It carries out the reaction 1-(9Z-octadecenoyl)-glycerol + 1,3-di-(9Z-octadecenoyl)-glycerol = 1,2,3-tri-(9Z-octadecenoyl)-glycerol + glycerol. The enzyme catalyses 1,2,3-tri-(9Z-octadecenoyl)-glycerol + H2O = 1,3-di-(9Z-octadecenoyl)-glycerol + (9Z)-octadecenoate + H(+). The catalysed reaction is a 1,2-diacyl-sn-glycero-3-phosphocholine + H2O = a 1-acyl-sn-glycero-3-phosphocholine + a fatty acid + H(+). The protein operates within phospholipid metabolism. It participates in glycerolipid metabolism. Specifically catalyzes coenzyme A (CoA)-dependent acylation of 1-acyl-sn-glycerol 3-phosphate (2-lysophosphatidic acid/LPA) to generate phosphatidic acid (PA), an important metabolic intermediate and precursor for both triglycerides and glycerophospholipids. Does not esterify other lysophospholipids. Acyl donors are long chain (at least C16) fatty acyl-CoAs: arachidonoyl-CoA, linoleoyl-CoA, oleoyl-CoA and at a lesser extent palmitoyl-CoA. Additionally possesses low triacylglycerol lipase and CoA-independent acylglycerol transacylase activities and thus may play a role in acyl-chain remodeling of triglycerides. In vitro may express hydrolytic activity against glycerolipids triacylglycerol, diacylglycerol and monoacylglycerol, with a strong preference for oleic acid as the acyl moiety. However, the triacylglycerol hydrolase activity is controversial and may be very low. Possesses phospholipase A2 activity. This Mus musculus (Mouse) protein is 1-acylglycerol-3-phosphate O-acyltransferase Pnpla3.